Reading from the N-terminus, the 878-residue chain is Ecdysone receptor (878 aa).

2 disordered regions span residues 1–27 (MKRRWSNNGGFMRLPEESSSEVTSSSN) and 209–254 (GLGM…SKKG). Positions 1 to 263 (MKRRWSNNGG…GPAPRVQEEL (263 aa)) are modulating. 2 NR C4-type zinc fingers span residues 264–284 (CLVCGDRASGYHYNALTCEGC) and 300–324 (CKFGRACEMDMYMRRKCQECRLKKC). The segment at residues 264–336 (CLVCGDRASG…VGMRPECVVP (73 aa)) is a DNA-binding region (nuclear receptor). The disordered stretch occupies residues 344–374 (RREKKAQKEKDKMTTSPSSQHGGNGSLASGG). Gly residues predominate over residues 365-374 (GGNGSLASGG). The 236-residue stretch at 419 to 654 (NQLAVIYKLI…FLEEIWDVHA (236 aa)) folds into the NR LBD domain. 2 stretches are compositionally biased toward low complexity: residues 698–709 (TSAAAAAAQHQP) and 728–759 (QTQPQLQPQLPPQLQGQLQPQLQPQLQTQLQP). The segment at 698 to 759 (TSAAAAAAQH…QPQLQTQLQP (62 aa)) is disordered.

It belongs to the nuclear hormone receptor family. NR1 subfamily. Heterodimer of USP and ECR. Only the heterodimer is capable of high-affinity binding to ecdysone. Interacts with trr in an ecdysone-dependent manner. Upon ecdysone stimulation, interacts with Nup98. In terms of tissue distribution, isoform B1 predominates over isoform A in larval tissues, imaginal histoblast nests and midgut islands. Isoform A predominates over B1 in imaginal disks, and the larval prothoracic gland.

It localises to the nucleus. Receptor for ecdysone. Binds to ecdysone response elements (ECRES) following ecdysone-binding, and recruitment of a complex containing the histone methyltransferase trr, leads to activate transcription of target genes. The protein is Ecdysone receptor (EcR) of Drosophila melanogaster (Fruit fly).